We begin with the raw amino-acid sequence, 616 residues long: Chaperone protein HscA (616 aa).

The protein belongs to the heat shock protein 70 family.

Functionally, chaperone involved in the maturation of iron-sulfur cluster-containing proteins. Has a low intrinsic ATPase activity which is markedly stimulated by HscB. Involved in the maturation of IscU. The polypeptide is Chaperone protein HscA (Pectobacterium carotovorum subsp. carotovorum (strain PC1)).